Reading from the N-terminus, the 247-residue chain is Phosphonates import ATP-binding protein PhnC (247 aa).

In terms of domain architecture, ABC transporter spans 5–246 (IEVKNLVKNY…EDDIRKVYQT (242 aa)). 37-44 (GESGAGKS) is an ATP binding site.

The protein belongs to the ABC transporter superfamily. Phosphonates importer (TC 3.A.1.9.1) family. As to quaternary structure, the complex is composed of two ATP-binding proteins (PhnC), two transmembrane proteins (PhnE) and a solute-binding protein (PhnD).

The protein resides in the cell inner membrane. The enzyme catalyses phosphonate(out) + ATP + H2O = phosphonate(in) + ADP + phosphate + H(+). Functionally, part of the ABC transporter complex PhnCDE involved in phosphonates import. Responsible for energy coupling to the transport system. The polypeptide is Phosphonates import ATP-binding protein PhnC (Fusobacterium nucleatum subsp. nucleatum (strain ATCC 25586 / DSM 15643 / BCRC 10681 / CIP 101130 / JCM 8532 / KCTC 2640 / LMG 13131 / VPI 4355)).